A 270-amino-acid chain; its full sequence is Ribosomal RNA small subunit methyltransferase A (270 aa).

The S-adenosyl-L-methionine site is built by His-11, Leu-13, Gly-38, Glu-59, Asp-84, and Asn-109.

The protein belongs to the class I-like SAM-binding methyltransferase superfamily. rRNA adenine N(6)-methyltransferase family. RsmA subfamily.

Its subcellular location is the cytoplasm. The enzyme catalyses adenosine(1518)/adenosine(1519) in 16S rRNA + 4 S-adenosyl-L-methionine = N(6)-dimethyladenosine(1518)/N(6)-dimethyladenosine(1519) in 16S rRNA + 4 S-adenosyl-L-homocysteine + 4 H(+). Specifically dimethylates two adjacent adenosines (A1518 and A1519) in the loop of a conserved hairpin near the 3'-end of 16S rRNA in the 30S particle. May play a critical role in biogenesis of 30S subunits. The sequence is that of Ribosomal RNA small subunit methyltransferase A from Crocosphaera subtropica (strain ATCC 51142 / BH68) (Cyanothece sp. (strain ATCC 51142)).